Reading from the N-terminus, the 419-residue chain is UDP-N-acetylglucosamine 1-carboxyvinyltransferase (419 aa).

Residue Lys22–Asn23 participates in phosphoenolpyruvate binding. Arg91 contributes to the UDP-N-acetyl-alpha-D-glucosamine binding site. Cys115 (proton donor) is an active-site residue. Residue Cys115 is modified to 2-(S-cysteinyl)pyruvic acid O-phosphothioketal. UDP-N-acetyl-alpha-D-glucosamine-binding positions include Arg120 to Leu124, Lys160 to Val163, Asp305, and Ile327.

The protein belongs to the EPSP synthase family. MurA subfamily.

The protein resides in the cytoplasm. It carries out the reaction phosphoenolpyruvate + UDP-N-acetyl-alpha-D-glucosamine = UDP-N-acetyl-3-O-(1-carboxyvinyl)-alpha-D-glucosamine + phosphate. Its pathway is cell wall biogenesis; peptidoglycan biosynthesis. Cell wall formation. Adds enolpyruvyl to UDP-N-acetylglucosamine. In Serratia proteamaculans (strain 568), this protein is UDP-N-acetylglucosamine 1-carboxyvinyltransferase.